The following is a 317-amino-acid chain: 1-phosphofructokinase (317 aa).

ATP-binding positions include 223–228 and 254–255; these read SMGAEG and GD. The Proton acceptor role is filled by Asp-255.

Belongs to the carbohydrate kinase PfkB family.

It catalyses the reaction beta-D-fructose 1-phosphate + ATP = beta-D-fructose 1,6-bisphosphate + ADP + H(+). Catalyzes the ATP-dependent phosphorylation of fructose-l-phosphate to fructose-l,6-bisphosphate. This Vibrio cholerae serotype O1 (strain ATCC 39315 / El Tor Inaba N16961) protein is 1-phosphofructokinase.